A 765-amino-acid chain; its full sequence is 5-methyltetrahydropteroyltriglutamate--homocysteine methyltransferase (765 aa).

5-methyltetrahydropteroyltri-L-glutamate-binding positions include 18 to 21 and lysine 114; that span reads REWK. L-homocysteine is bound by residues 437–439 and glutamate 490; that span reads IGS. Residues 437 to 439 and glutamate 490 contribute to the L-methionine site; that span reads IGS. Residue tryptophan 567 participates in 5-methyltetrahydropteroyltri-L-glutamate binding. Aspartate 605 contributes to the L-homocysteine binding site. Residue aspartate 605 coordinates L-methionine. A 5-methyltetrahydropteroyltri-L-glutamate-binding site is contributed by glutamate 611. 3 residues coordinate Zn(2+): histidine 647, cysteine 649, and glutamate 671. Histidine 700 (proton donor) is an active-site residue. Zn(2+) is bound at residue cysteine 732.

It belongs to the vitamin-B12 independent methionine synthase family. It depends on Zn(2+) as a cofactor.

The enzyme catalyses 5-methyltetrahydropteroyltri-L-glutamate + L-homocysteine = tetrahydropteroyltri-L-glutamate + L-methionine. It functions in the pathway amino-acid biosynthesis; L-methionine biosynthesis via de novo pathway; L-methionine from L-homocysteine (MetE route): step 1/1. Its function is as follows. Catalyzes the transfer of a methyl group from 5-methyltetrahydrofolate to homocysteine resulting in methionine formation. In Listeria innocua serovar 6a (strain ATCC BAA-680 / CLIP 11262), this protein is 5-methyltetrahydropteroyltriglutamate--homocysteine methyltransferase.